We begin with the raw amino-acid sequence, 106 residues long: Foxo1-corepressor (106 aa).

The segment at 1-44 (MGGPTRRHQEEGSAECLGGPSTRAAPGPGLRDFHFTTAGPSKAD) is disordered. Residues 78-87 (IGTLYIRLDL) carry the Nuclear export signal motif. Threonine 93 is subject to Phosphothreonine; by PKA.

In terms of assembly, interacts with FOXO1 (via N-terminal domain); the interaction is direct, occurs in a forskolin-independent manner that prevents SIRT1 binding to FOXO1. Interacts with FOXO3. Does not interact with FOXO4. Phosphorylated at Thr-93 by PKA, leading to import into the nucleus. Expressed in adipocytes. Expressed in brown and white adipose tissue but not in liver. Protein levels in brown and white adipose tissues decrease following fasting (at protein level). Expressed in white and brown adipose tissues. Expressed in adipocytes. Not expressed in liver, skeletal muscle and brain.

The protein resides in the cytoplasm. It is found in the cytosol. It localises to the nucleus. Regulator of adipocytes that acts by repressing FOXO1 transcriptional activity. Acts by promoting acetylation of FOXO1, both by preventing the interaction between FOXO1 and SIRT1 deacetylase, and by mediating acetyltransferase activity in vitro. Regulates insulin sensitivity and energy metabolism. The polypeptide is Foxo1-corepressor (Fcor) (Mus musculus (Mouse)).